A 244-amino-acid chain; its full sequence is tRNA (guanine-N(7)-)-methyltransferase (244 aa).

Over residues 1 to 10 (MSDTPQSPAQ) the composition is skewed to polar residues. A disordered region spans residues 1 to 20 (MSDTPQSPAQGSLAEHDEAR). The S-adenosyl-L-methionine site is built by Glu-74, Glu-99, Asp-126, and Asp-149. Residue Asp-149 is part of the active site. Substrate is bound by residues Lys-153, Asp-185, and 222–225 (TKFE).

The protein belongs to the class I-like SAM-binding methyltransferase superfamily. TrmB family.

The enzyme catalyses guanosine(46) in tRNA + S-adenosyl-L-methionine = N(7)-methylguanosine(46) in tRNA + S-adenosyl-L-homocysteine. Its pathway is tRNA modification; N(7)-methylguanine-tRNA biosynthesis. Catalyzes the formation of N(7)-methylguanine at position 46 (m7G46) in tRNA. This Pseudomonas aeruginosa (strain UCBPP-PA14) protein is tRNA (guanine-N(7)-)-methyltransferase.